Consider the following 285-residue polypeptide: MQIKSLLLAAAAAPAALGAAVGTVKPFNCGTDAPSRQHIQMTKEIAEKEAAFTAAGGVSAQAAINVNVYFHVVASSTSLSGGYVTSTMINNQVSVLNTAYAPHGIQFTLKGTDYTVNSNWAVDGSELAMKKALRKGTYKDLNLYILKDLGDALGYCYFPTSVTSKSNDWYYDGCSILYNTLPGGDLTNYNLGHTSTHEVGHWFGLYHTFQGGCTGNGDYVADTPAQASASSGCPTGRDSCPSQTGLDPIHNYMDYSYDTCYEEFTAGQKTRMTSYFNQYRANASV.

Positions 1-18 are cleaved as a signal peptide; it reads MQIKSLLLAAAAAPAALG. Residue histidine 197 participates in Zn(2+) binding. The active site involves glutamate 198. Residue histidine 201 participates in Zn(2+) binding. A disulfide bond links cysteine 233 and cysteine 260. N-linked (GlcNAc...) asparagine glycosylation occurs at asparagine 282.

Belongs to the peptidase M43B family.

Its subcellular location is the secreted. Its function is as follows. Secreted metalloproteinase that allows assimilation of proteinaceous substrates. The protein is Extracellular metalloprotease SMAC_06893 of Sordaria macrospora (strain ATCC MYA-333 / DSM 997 / K(L3346) / K-hell).